Here is a 155-residue protein sequence, read N- to C-terminus: Ribosome maturation factor RimP (155 aa).

The protein belongs to the RimP family.

Its subcellular location is the cytoplasm. Required for maturation of 30S ribosomal subunits. This is Ribosome maturation factor RimP from Gemmatimonas aurantiaca (strain DSM 14586 / JCM 11422 / NBRC 100505 / T-27).